The primary structure comprises 348 residues: sn-glycerol-3-phosphate import ATP-binding protein UgpC 3 (348 aa).

The region spanning 4–234 (INIVDVKKNY…PASLFVAGFI (231 aa)) is the ABC transporter domain. Position 36 to 43 (36 to 43 (GPSGCGKS)) interacts with ATP.

It belongs to the ABC transporter superfamily. sn-glycerol-3-phosphate importer (TC 3.A.1.1.3) family. The complex is composed of two ATP-binding proteins (UgpC), two transmembrane proteins (UgpA and UgpE) and a solute-binding protein (UgpB).

The protein resides in the cell inner membrane. The enzyme catalyses sn-glycerol 3-phosphate(out) + ATP + H2O = sn-glycerol 3-phosphate(in) + ADP + phosphate + H(+). In terms of biological role, part of the ABC transporter complex UgpBAEC involved in sn-glycerol-3-phosphate (G3P) import. Responsible for energy coupling to the transport system. The chain is sn-glycerol-3-phosphate import ATP-binding protein UgpC 3 from Rhizobium etli (strain ATCC 51251 / DSM 11541 / JCM 21823 / NBRC 15573 / CFN 42).